The sequence spans 346 residues: Alkanal monooxygenase alpha chain (346 aa).

Heterodimer of an alpha and a beta chain.

The catalysed reaction is a long-chain fatty aldehyde + FMNH2 + O2 = a long-chain fatty acid + hnu + FMN + H2O + 2 H(+). Light-emitting reaction in luminous bacteria. This chain is Alkanal monooxygenase alpha chain (luxA), found in Photobacterium phosphoreum.